The chain runs to 1023 residues: Sodium/potassium-transporting ATPase subunit alpha-1 (1023 aa).

A propeptide spanning residues 1–5 is cleaved from the precursor; that stretch reads MGKGV. A compositionally biased stretch (basic and acidic residues) spans 1–11; sequence MGKGVGRDKYE. Residues 1–39 form a disordered region; sequence MGKGVGRDKYEPAAVSEQGDKKGKKGKKDRDMDELKKEV. Topologically, residues 6–87 are cytoplasmic; sequence GRDKYEPAAV…NALTPPPTTP (82 aa). Lysine 9 is modified (N6-acetyllysine). Tyrosine 10 carries the post-translational modification Phosphotyrosine. Serine 16 is modified (phosphoserine). The residue at position 21 (lysine 21) is an N6-acetyllysine. The segment covering 28 to 39 has biased composition (basic and acidic residues); that stretch reads KDRDMDELKKEV. Phosphoserine occurs at positions 40 and 47. Residues 82 to 84 are phosphoinositide-3 kinase binding; sequence PPP. Residues 88-108 traverse the membrane as a helical segment; sequence EWIKFCRQLFGGFSMLLWIGA. The Extracellular segment spans residues 109–131; the sequence is ILCFLAYSIQAATEEEPQNDNLY. Residues 132-152 traverse the membrane as a helical segment; the sequence is LGVVLSAVVIITGCFSYYQEA. The Cytoplasmic portion of the chain corresponds to 153–288; the sequence is KSSKIMESFK…GGQTPIAAEI (136 aa). Residues 216-235 are disordered; the sequence is SSLTGESEPQTRSPDFTNEN. Serine 228 carries the post-translational modification Phosphoserine. Phosphotyrosine is present on tyrosine 260. The helical transmembrane segment at 289–308 threads the bilayer; the sequence is EHFIHIITGVAVFLGVSFFI. Residues 309 to 320 are Extracellular-facing; it reads LSLILEYTWLEA. Residues 321–338 traverse the membrane as a helical segment; it reads VIFLIGIIVANVPEGLLA. At 339 to 772 the chain is on the cytoplasmic side; it reads TVTVCLTLTA…EEGRLIFDNL (434 aa). Aspartate 376 acts as the 4-aspartylphosphate intermediate in catalysis. 2 positions are modified to phosphoserine: serine 452 and serine 484. Lysine 487 is an ATP binding site. A Phosphotyrosine modification is found at tyrosine 542. The segment at 596 to 717 is mediates interaction with SCN7A; the sequence is RAAVPDAVGK…QGAIVAVTGD (122 aa). Lysine 661 is modified (N6-succinyllysine). Phosphoserine occurs at positions 668 and 675. Mg(2+) is bound by residues aspartate 717 and aspartate 721. Residues 773–792 form a helical membrane-spanning segment; sequence KKSIAYTLTSNIPEITPFLI. The Extracellular portion of the chain corresponds to 793–802; sequence FIIANIPLPL. The chain crosses the membrane as a helical span at residues 803–823; sequence GTVTILCIDLGTDMVPAISLA. Residues 824-843 are Cytoplasmic-facing; sequence YEQAESDIMKRQPRNPKTDK. A helical transmembrane segment spans residues 844–866; the sequence is LVNERLISMAYGQIGMIQALGGF. Residues 867 to 918 are Extracellular-facing; that stretch reads FTYFVILAENGFLPIHLLGLRVDWDDRWINDVEDSYGQQWTYEQRKIVEFTC. A helical membrane pass occupies residues 919 to 938; that stretch reads HTAFFVSIVVVQWADLVICK. Residues 939–951 are Cytoplasmic-facing; that stretch reads TRRNSVFQQGMKN. Serine 943 carries the post-translational modification Phosphoserine; by PKA. The chain crosses the membrane as a helical span at residues 952 to 970; it reads KILIFGLFEETALAAFLSY. Residues 971–985 are Extracellular-facing; that stretch reads CPGMGVALRMYPLKP. A helical membrane pass occupies residues 986–1006; sequence TWWFCAFPYSLLIFVYDEVRK. Residues 1007–1023 are Cytoplasmic-facing; the sequence is LIIRRRPGGWVEKETYY.

The protein belongs to the cation transport ATPase (P-type) (TC 3.A.3) family. Type IIC subfamily. In terms of assembly, the sodium/potassium-transporting ATPase is composed of a catalytic alpha subunit, an auxiliary non-catalytic beta subunit and an additional regulatory subunit. Interacts with regulatory subunit FXYD1. Interacts with regulatory subunit FXYD3. Interacts with SIK1. Binds the HLA class II histocompatibility antigen DR1. Interacts with SLC35G1 and STIM1. Interacts with CLN3; this interaction regulates the sodium/potassium-transporting ATPase complex localization at the plasma membrane. Interacts with SCN7A; activates ATP1A1 P-type sodium:potassium-exchanging transporter activity which indirectly signals to nearby neurons to regulate sodium homeostasis. Post-translationally, phosphorylation on Tyr-10 modulates pumping activity. Phosphorylation of Ser-943 by PKA modulates the response of ATP1A1 to PKC. Dephosphorylation by protein phosphatase 2A (PP2A) following increases in intracellular sodium, leading to increase catalytic activity.

It localises to the cell membrane. Its subcellular location is the basolateral cell membrane. The protein resides in the sarcolemma. The protein localises to the cell projection. It is found in the axon. It localises to the melanosome. It carries out the reaction K(+)(out) + Na(+)(in) + ATP + H2O = K(+)(in) + Na(+)(out) + ADP + phosphate + H(+). This is the catalytic component of the active enzyme, which catalyzes the hydrolysis of ATP coupled with the exchange of sodium and potassium ions across the plasma membrane. This action creates the electrochemical gradient of sodium and potassium ions, providing the energy for active transport of various nutrients. Could also be part of an osmosensory signaling pathway that senses body-fluid sodium levels and controls salt intake behavior as well as voluntary water intake to regulate sodium homeostasis. In Homo sapiens (Human), this protein is Sodium/potassium-transporting ATPase subunit alpha-1 (ATP1A1).